Consider the following 91-residue polypeptide: ATP synthase subunit c (91 aa).

The next 2 helical transmembrane spans lie at 4–24 (FTMC…GTGI) and 53–73 (IGLA…LIIL).

This sequence belongs to the ATPase C chain family. In terms of assembly, F-type ATPases have 2 components, F(1) - the catalytic core - and F(0) - the membrane proton channel. F(1) has five subunits: alpha(3), beta(3), gamma(1), delta(1), epsilon(1). F(0) has three main subunits: a(1), b(2) and c(10-14). The alpha and beta chains form an alternating ring which encloses part of the gamma chain. F(1) is attached to F(0) by a central stalk formed by the gamma and epsilon chains, while a peripheral stalk is formed by the delta and b chains.

It is found in the cell inner membrane. In terms of biological role, f(1)F(0) ATP synthase produces ATP from ADP in the presence of a proton or sodium gradient. F-type ATPases consist of two structural domains, F(1) containing the extramembraneous catalytic core and F(0) containing the membrane proton channel, linked together by a central stalk and a peripheral stalk. During catalysis, ATP synthesis in the catalytic domain of F(1) is coupled via a rotary mechanism of the central stalk subunits to proton translocation. Functionally, key component of the F(0) channel; it plays a direct role in translocation across the membrane. A homomeric c-ring of between 10-14 subunits forms the central stalk rotor element with the F(1) delta and epsilon subunits. In Citrifermentans bemidjiense (strain ATCC BAA-1014 / DSM 16622 / JCM 12645 / Bem) (Geobacter bemidjiensis), this protein is ATP synthase subunit c.